Here is a 120-residue protein sequence, read N- to C-terminus: Crustacean hyperglycemic hormones 1 (120 aa).

The signal sequence occupies residues 1-24; the sequence is MIAFRAVWSALLASLLLLLLAPSA. Cystine bridges form between cysteine 53-cysteine 89, cysteine 69-cysteine 85, and cysteine 72-cysteine 98. Valine amide is present on valine 118.

It belongs to the arthropod CHH/MIH/GIH/VIH hormone family. In terms of tissue distribution, produced by the medulla terminalis X-organ in the eyestalks and transported to the sinus gland where they are stored and released.

The protein localises to the secreted. Hormone found in the sinus gland of isopods and decapods which controls the blood sugar level. Has a secretagogue action over the amylase released from the midgut gland. May act as a stress hormone and may be involved in the control of molting and reproduction. The chain is Crustacean hyperglycemic hormones 1 from Penaeus japonicus (Kuruma prawn).